Here is a 457-residue protein sequence, read N- to C-terminus: Probable cytosolic Fe-S cluster assembly factor oxy-4 (457 aa).

Cys-25 contributes to the [4Fe-4S] cluster binding site. The tract at residues 38-59 is disordered; the sequence is KEESQVNIRTKKPKDKESSKTE. 7 residues coordinate [4Fe-4S] cluster: Cys-71, Cys-74, Cys-77, Cys-176, Cys-232, Cys-380, and Cys-384.

The protein belongs to the NARF family.

Its function is as follows. Component of the cytosolic iron-sulfur (Fe/S) protein assembly machinery. Required for maturation of extramitochondrial Fe/S proteins. This is Probable cytosolic Fe-S cluster assembly factor oxy-4 (oxy-4) from Caenorhabditis elegans.